We begin with the raw amino-acid sequence, 261 residues long: Imidazole glycerol phosphate synthase subunit HisF (261 aa).

Active-site residues include aspartate 16 and aspartate 135.

It belongs to the HisA/HisF family. In terms of assembly, heterodimer of HisH and HisF.

Its subcellular location is the cytoplasm. It catalyses the reaction 5-[(5-phospho-1-deoxy-D-ribulos-1-ylimino)methylamino]-1-(5-phospho-beta-D-ribosyl)imidazole-4-carboxamide + L-glutamine = D-erythro-1-(imidazol-4-yl)glycerol 3-phosphate + 5-amino-1-(5-phospho-beta-D-ribosyl)imidazole-4-carboxamide + L-glutamate + H(+). It participates in amino-acid biosynthesis; L-histidine biosynthesis; L-histidine from 5-phospho-alpha-D-ribose 1-diphosphate: step 5/9. IGPS catalyzes the conversion of PRFAR and glutamine to IGP, AICAR and glutamate. The HisF subunit catalyzes the cyclization activity that produces IGP and AICAR from PRFAR using the ammonia provided by the HisH subunit. This is Imidazole glycerol phosphate synthase subunit HisF from Mycolicibacterium smegmatis (strain ATCC 700084 / mc(2)155) (Mycobacterium smegmatis).